The chain runs to 168 residues: Glycine-rich RNA-binding protein 2 (168 aa).

The RRM domain maps to 8 to 86 (YRCFVGGLAW…RNITVNQAQS (79 aa)). Residues 148–168 (GYGGGGGYGGNRGDSGGNWRN) are disordered.

Functionally, possibly has a role in RNA transcription or processing during stress. This chain is Glycine-rich RNA-binding protein 2 (GRP2), found in Sorghum bicolor (Sorghum).